The following is a 378-amino-acid chain: UPF0284 protein MK0224 (378 aa).

This sequence belongs to the UPF0284 family.

This chain is UPF0284 protein MK0224, found in Methanopyrus kandleri (strain AV19 / DSM 6324 / JCM 9639 / NBRC 100938).